The chain runs to 2028 residues: Protein Daple (2028 aa).

The Calponin-homology (CH) domain maps to L11–A131. Residues A222–Q250 form a disordered region. S227 and S239 each carry phosphoserine. A compositionally biased stretch (low complexity) spans I229 to S245. Coiled coils occupy residues E247–E428, E456–G1017, H1045–I1094, and L1139–K1393. S486 is subject to Phosphoserine. Residues R1011–F1024 are compositionally biased toward polar residues. The disordered stretch occupies residues R1011–P1043. Basic and acidic residues predominate over residues K1419 to S1428. Disordered stretches follow at residues K1419–M1724 and A1736–R1803. Composition is skewed to low complexity over residues S1439–P1450, S1517–P1534, and S1568–L1588. At S1444 the chain carries Phosphoserine. The span at K1589 to S1604 shows a compositional bias: polar residues. At S1601 the chain carries Phosphoserine. The GBA motif lies at C1661–C1691. Over residues P1689–S1704 the composition is skewed to basic and acidic residues. A compositionally biased stretch (low complexity) spans H1792–R1803. Position 1806 is a phosphoserine (S1806). The segment at S1816 to V2021 is disordered. Residues S1842–S1855 show a composition bias toward polar residues. The span at R1879–A1897 shows a compositional bias: basic and acidic residues. A compositionally biased stretch (low complexity) spans S1902 to S1924. T1954 is subject to Phosphothreonine. The short motif at Y2025–V2028 is the PDZ-binding element. The interval G2026–V2028 is DVL1-binding.

The protein belongs to the CCDC88 family. As to quaternary structure, homooligomer. Interacts with DVL1 (via PDZ domain); dissociates following initiation of non-canonical Wnt signaling. Interacts (via C-terminus) with ligand-activated Wnt receptor FZD7; competes with DVL1 for binding to FZD7 and displaces DVL1 from ligand-activated FZD7. Interacts (via GBA motif) with guanine nucleotide-binding protein G(i) alpha subunits GNAI1, GNAI2 and GNAI3 (inactive GDP-bound form); interacts with higher affinity with GNAI1 and GNAI3 than with GNAI2 and interaction leads to G(i) alpha subunit activation. Does not interact with GNAO1.

The protein localises to the cytoplasm. The protein resides in the cell junction. Functionally, required for activation of guanine nucleotide-binding proteins (G-proteins) during non-canonical Wnt signaling. Binds to ligand-activated Wnt receptor FZD7, displacing DVL1 from the FZD7 receptor and leading to inhibition of canonical Wnt signaling. Acts as a non-receptor guanine nucleotide exchange factor by also binding to guanine nucleotide-binding protein G(i) alpha (Gi-alpha) subunits, leading to their activation. Binding to Gi-alpha subunits displaces the beta and gamma subunits from the heterotrimeric G-protein complex, triggering non-canonical Wnt responses such as activation of RAC1 and PI3K-AKT signaling. Promotes apical constriction of cells via ARHGEF18. This chain is Protein Daple (CCDC88C), found in Homo sapiens (Human).